The following is a 77-amino-acid chain: Large ribosomal subunit protein bL28 (77 aa).

This sequence belongs to the bacterial ribosomal protein bL28 family.

This Delftia acidovorans (strain DSM 14801 / SPH-1) protein is Large ribosomal subunit protein bL28.